Consider the following 171-residue polypeptide: Large ribosomal subunit protein uL10 (171 aa).

This sequence belongs to the universal ribosomal protein uL10 family. In terms of assembly, part of the ribosomal stalk of the 50S ribosomal subunit. The N-terminus interacts with L11 and the large rRNA to form the base of the stalk. The C-terminus forms an elongated spine to which L12 dimers bind in a sequential fashion forming a multimeric L10(L12)X complex.

Functionally, forms part of the ribosomal stalk, playing a central role in the interaction of the ribosome with GTP-bound translation factors. The sequence is that of Large ribosomal subunit protein uL10 from Cereibacter sphaeroides (strain ATCC 17023 / DSM 158 / JCM 6121 / CCUG 31486 / LMG 2827 / NBRC 12203 / NCIMB 8253 / ATH 2.4.1.) (Rhodobacter sphaeroides).